The following is a 233-amino-acid chain: Putative peroxiredoxin (233 aa).

Residues 41–200 (AQIGKEAPEF…TIRIVKAIQF (160 aa)) enclose the Thioredoxin domain. The active-site Cysteine sulfenic acid (-SOH) intermediate is the C87.

Belongs to the peroxiredoxin family. AhpC/Prx1 subfamily. In terms of assembly, homodimer; disulfide-linked, upon oxidation.

The protein localises to the cell membrane. It catalyses the reaction a hydroperoxide + [thioredoxin]-dithiol = an alcohol + [thioredoxin]-disulfide + H2O. Functionally, thiol-specific peroxidase that catalyzes the reduction of hydrogen peroxide and organic hydroperoxides to water and alcohols, respectively. Plays a role in cell protection against oxidative stress by detoxifying peroxides and as sensor of hydrogen peroxide-mediated signaling events. This is Putative peroxiredoxin from Entamoeba histolytica (strain ATCC 30459 / HM-1:IMSS / ABRM).